We begin with the raw amino-acid sequence, 436 residues long: Xylose isomerase (436 aa).

Residues aspartate 306 and aspartate 308 each coordinate Mg(2+).

This sequence belongs to the xylose isomerase family. In terms of assembly, homotetramer. Requires Mg(2+) as cofactor.

It is found in the cytoplasm. The enzyme catalyses alpha-D-xylose = alpha-D-xylulofuranose. The protein is Xylose isomerase of Sinorhizobium fredii (strain NBRC 101917 / NGR234).